The primary structure comprises 291 residues: Shikimate dehydrogenase (NADP(+)) (291 aa).

Shikimate contacts are provided by residues 23–25 (SFS) and Thr70. Residue Lys74 is the Proton acceptor of the active site. Positions 95 and 110 each coordinate shikimate. Residues 135 to 139 (GAGGA) and Leu232 contribute to the NADP(+) site. Residue Tyr234 participates in shikimate binding. Gly255 is an NADP(+) binding site.

Belongs to the shikimate dehydrogenase family. In terms of assembly, homodimer.

It catalyses the reaction shikimate + NADP(+) = 3-dehydroshikimate + NADPH + H(+). Its pathway is metabolic intermediate biosynthesis; chorismate biosynthesis; chorismate from D-erythrose 4-phosphate and phosphoenolpyruvate: step 4/7. Functionally, involved in the biosynthesis of the chorismate, which leads to the biosynthesis of aromatic amino acids. Catalyzes the reversible NADPH linked reduction of 3-dehydroshikimate (DHSA) to yield shikimate (SA). The protein is Shikimate dehydrogenase (NADP(+)) of Desulforamulus reducens (strain ATCC BAA-1160 / DSM 100696 / MI-1) (Desulfotomaculum reducens).